A 130-amino-acid polypeptide reads, in one-letter code: MVVRSWRHMKERYNLIGTRCKTCGKVYFPSRTVCPDCRRKGELEEFQLSGKGKIYTYSIVYAPPKEFNKLTPYVIAIVELEEGPKVTAQVDCDINKISIGIPVEAAFRRIKEDGKDGIISYGYKFVPITE.

Zn(2+) is bound by residues C20, C23, C34, and C37.

Belongs to the scaffold protein DUF35 family. As to quaternary structure, interacts with acetoacetyl-CoA thiolase and HMG-CoA synthase (HMGCS) that catalyzes the first and second step in the mevalonate pathway, respectively.

Its function is as follows. Functions as a scaffold to connect the acetoacetyl-CoA thiolase and HMG-CoA synthase (HMGCS) dimers in the channeling thiolase/HMGCS complex, which allows for efficient coupling of the endergonic thiolase reaction with the exergonic HMGCS reaction. The chain is DUF35 domain-containing scaffold protein from Methanothermococcus thermolithotrophicus (Methanococcus thermolithotrophicus).